The primary structure comprises 159 residues: MEENKEFLLTQEGYDKLEEELENLKVVKRKEVAERIKVAISFGDLSENAEYDEAKKEQAQVEERILKLENMVRKAVIIDESKIDLNVVTIGSIVKVKDLEFDEEVEYTIVGSTEADPYDGKISNESPVGKALLGRAAKEVVEVQVPDGVAKFEILEIRR.

The stretch at 2 to 77 forms a coiled coil; sequence EENKEFLLTQ…LENMVRKAVI (76 aa).

This sequence belongs to the GreA/GreB family.

Necessary for efficient RNA polymerase transcription elongation past template-encoded arresting sites. The arresting sites in DNA have the property of trapping a certain fraction of elongating RNA polymerases that pass through, resulting in locked ternary complexes. Cleavage of the nascent transcript by cleavage factors such as GreA or GreB allows the resumption of elongation from the new 3'terminus. GreA releases sequences of 2 to 3 nucleotides. In Clostridioides difficile (strain 630) (Peptoclostridium difficile), this protein is Transcription elongation factor GreA.